A 429-amino-acid chain; its full sequence is Protein FAM98B (429 aa).

The interval 304–429 (RVPDRGGRPN…GGGGGGYRRY (126 aa)) is disordered. A compositionally biased stretch (basic and acidic residues) spans 305–314 (VPDRGGRPNE). Gly residues predominate over residues 332 to 429 (GGRGGWGGGG…GGGGGGYRRY (98 aa)).

Belongs to the FAM98 family. Homodimer. Component of a tRNA-splicing ligase complex. Interacts with FAM98A.

The protein resides in the nucleus. It is found in the cytoplasm. Functionally, positively stimulates PRMT1-induced protein arginine dimethylated arginine methylation. This Mus musculus (Mouse) protein is Protein FAM98B (Fam98b).